The primary structure comprises 119 residues: Ribonuclease P protein component (119 aa).

The protein belongs to the RnpA family. As to quaternary structure, consists of a catalytic RNA component (M1 or rnpB) and a protein subunit.

The catalysed reaction is Endonucleolytic cleavage of RNA, removing 5'-extranucleotides from tRNA precursor.. Functionally, RNaseP catalyzes the removal of the 5'-leader sequence from pre-tRNA to produce the mature 5'-terminus. It can also cleave other RNA substrates such as 4.5S RNA. The protein component plays an auxiliary but essential role in vivo by binding to the 5'-leader sequence and broadening the substrate specificity of the ribozyme. This chain is Ribonuclease P protein component, found in Streptococcus gordonii (strain Challis / ATCC 35105 / BCRC 15272 / CH1 / DL1 / V288).